The sequence spans 714 residues: GATA zinc finger domain-containing protein 10 (714 aa).

6 disordered regions span residues 28–97, 115–180, 266–362, 394–419, 454–476, and 528–621; these read YIQQ…NKQI, TMPH…QQQQ, MPMN…QQQQ, QQQQQQPQYHNGMPHHMQQHSPESMD, MHLQQQQQNQQNQQIQQQHQQIQ, and IQQQ…RRRT. Composition is skewed to low complexity over residues 30 to 94 and 130 to 147; these read QQQQ…NNNN and QQQQQQQQQHYQQQQHPH. Positions 148–168 are enriched in basic residues; it reads QQQHPHQQQHPHQQQHPHQQQ. Positions 169–180 are enriched in low complexity; the sequence is HPHQQQIQQQQQ. The segment covering 271–282 has biased composition (polar residues); sequence GGNSRKNSFDMY. 2 stretches are compositionally biased toward low complexity: residues 283 to 322 and 340 to 362; these read NNNNNNNNNNNINNNNNNNNNNNINNNNNNNNNNNNNNNI and QHQQQHQQQQHQQQHQQQHQQQQ. Composition is skewed to low complexity over residues 457–476 and 528–549; these read QQQQQNQQNQQIQQQHQQIQ and IQQQQQSIAKQQMPQQQNTPNN. Polar residues predominate over residues 550–569; it reads GSPSSSDGKSPVNSNTAITS. Residues 570-588 show a composition bias toward low complexity; it reads NNNNNNNNNNNNNNNNNNN. The GATA-type zinc-finger motif lies at 631–656; it reads CHYCEVTETPEWRRGPDGDHTLCNAC. Positions 661 to 694 form a coiled coil; sequence AKSQKKLAREKELEKQKELEREKERENTRKHSID. The span at 667–693 shows a compositional bias: basic and acidic residues; sequence LAREKELEKQKELEREKERENTRKHSI. Residues 667-714 are disordered; that stretch reads LAREKELEKQKELEREKERENTRKHSIDFMLMNDTSSAPTNSQNPTPN. A compositionally biased stretch (polar residues) spans 699–714; sequence NDTSSAPTNSQNPTPN.

This chain is GATA zinc finger domain-containing protein 10 (gtaJ), found in Dictyostelium discoideum (Social amoeba).